A 346-amino-acid polypeptide reads, in one-letter code: Methylthioribose-1-phosphate isomerase (346 aa).

Substrate contacts are provided by residues 46–48 (RGA), R89, and Q196. The Proton donor role is filled by D237. Residue 247–248 (NK) coordinates substrate.

It belongs to the eIF-2B alpha/beta/delta subunits family. MtnA subfamily.

It carries out the reaction 5-(methylsulfanyl)-alpha-D-ribose 1-phosphate = 5-(methylsulfanyl)-D-ribulose 1-phosphate. Its pathway is amino-acid biosynthesis; L-methionine biosynthesis via salvage pathway; L-methionine from S-methyl-5-thio-alpha-D-ribose 1-phosphate: step 1/6. In terms of biological role, catalyzes the interconversion of methylthioribose-1-phosphate (MTR-1-P) into methylthioribulose-1-phosphate (MTRu-1-P). The polypeptide is Methylthioribose-1-phosphate isomerase (Geotalea daltonii (strain DSM 22248 / JCM 15807 / FRC-32) (Geobacter daltonii)).